A 301-amino-acid polypeptide reads, in one-letter code: Acetyl-coenzyme A carboxylase carboxyl transferase subunit beta (301 aa).

The region spanning 25–294 (LWIKDPSTGE…NSDAPAPQKP (270 aa)) is the CoA carboxyltransferase N-terminal domain.

This sequence belongs to the AccD/PCCB family. Acetyl-CoA carboxylase is a heterohexamer composed of biotin carboxyl carrier protein (AccB), biotin carboxylase (AccC) and two subunits each of ACCase subunit alpha (AccA) and ACCase subunit beta (AccD).

It localises to the cytoplasm. It catalyses the reaction N(6)-carboxybiotinyl-L-lysyl-[protein] + acetyl-CoA = N(6)-biotinyl-L-lysyl-[protein] + malonyl-CoA. It functions in the pathway lipid metabolism; malonyl-CoA biosynthesis; malonyl-CoA from acetyl-CoA: step 1/1. Its function is as follows. Component of the acetyl coenzyme A carboxylase (ACC) complex. Biotin carboxylase (BC) catalyzes the carboxylation of biotin on its carrier protein (BCCP) and then the CO(2) group is transferred by the transcarboxylase to acetyl-CoA to form malonyl-CoA. The protein is Acetyl-coenzyme A carboxylase carboxyl transferase subunit beta of Brucella abortus (strain 2308).